An 801-amino-acid chain; its full sequence is Mitochondrial intermediate peptidase (801 aa).

Residues 1–41 (MKDQLLVPLRRRPWTCQKCLQRLQLPRHQTRRSFETAASPF) constitute a mitochondrion transit peptide. Residue His-564 coordinates Zn(2+). Glu-565 is a catalytic residue. The Zn(2+) site is built by His-568 and His-571.

It belongs to the peptidase M3 family. Requires Zn(2+) as cofactor.

Its subcellular location is the mitochondrion matrix. The catalysed reaction is Release of an N-terminal octapeptide as second stage of processing of some proteins imported into the mitochondrion.. Its function is as follows. Cleaves proteins, imported into the mitochondrion, to their mature size. While most mitochondrial precursor proteins are processed to the mature form in one step by mitochondrial processing peptidase (MPP), the sequential cleavage by MIP of an octapeptide after initial processing by MPP is a required step for a subgroup of nuclear-encoded precursor proteins destined for the matrix or the inner membrane. This Aspergillus fumigatus (strain ATCC MYA-4609 / CBS 101355 / FGSC A1100 / Af293) (Neosartorya fumigata) protein is Mitochondrial intermediate peptidase (oct1).